Reading from the N-terminus, the 288-residue chain is ATP synthase gamma chain (288 aa).

This sequence belongs to the ATPase gamma chain family. As to quaternary structure, F-type ATPases have 2 components, CF(1) - the catalytic core - and CF(0) - the membrane proton channel. CF(1) has five subunits: alpha(3), beta(3), gamma(1), delta(1), epsilon(1). CF(0) has three main subunits: a, b and c.

Its subcellular location is the cell inner membrane. Produces ATP from ADP in the presence of a proton gradient across the membrane. The gamma chain is believed to be important in regulating ATPase activity and the flow of protons through the CF(0) complex. The polypeptide is ATP synthase gamma chain (Actinobacillus pleuropneumoniae serotype 3 (strain JL03)).